A 316-amino-acid polypeptide reads, in one-letter code: 4-diphosphocytidyl-2-C-methyl-D-erythritol kinase (316 aa).

The active site involves K23. An ATP-binding site is contributed by 108–118 (PVAGGMAGGSA). Residue D150 is part of the active site.

Belongs to the GHMP kinase family. IspE subfamily.

It carries out the reaction 4-CDP-2-C-methyl-D-erythritol + ATP = 4-CDP-2-C-methyl-D-erythritol 2-phosphate + ADP + H(+). The protein operates within isoprenoid biosynthesis; isopentenyl diphosphate biosynthesis via DXP pathway; isopentenyl diphosphate from 1-deoxy-D-xylulose 5-phosphate: step 3/6. Functionally, catalyzes the phosphorylation of the position 2 hydroxy group of 4-diphosphocytidyl-2C-methyl-D-erythritol. In Mycolicibacterium paratuberculosis (strain ATCC BAA-968 / K-10) (Mycobacterium paratuberculosis), this protein is 4-diphosphocytidyl-2-C-methyl-D-erythritol kinase.